The sequence spans 721 residues: Polyribonucleotide nucleotidyltransferase (721 aa).

Positions 495 and 501 each coordinate Mg(2+). The KH domain maps to 562–621; the sequence is PRLLSFRIDPELIGTVIGPGGRTIKGITERTNTKIDIEDSGIVTIASHDGAAADEAQKII. Residues 631 to 699 form the S1 motif domain; sequence GEVFSGAITR…NRGRINLTLR (69 aa). Residues 700–721 are disordered; sequence GVPQNGEEAEPAPAPTPVAPLN. The span at 711–721 shows a compositional bias: pro residues; that stretch reads APAPTPVAPLN.

This sequence belongs to the polyribonucleotide nucleotidyltransferase family. Requires Mg(2+) as cofactor.

The protein resides in the cytoplasm. It catalyses the reaction RNA(n+1) + phosphate = RNA(n) + a ribonucleoside 5'-diphosphate. Its function is as follows. Involved in mRNA degradation. Catalyzes the phosphorolysis of single-stranded polyribonucleotides processively in the 3'- to 5'-direction. In Synechococcus sp. (strain WH7803), this protein is Polyribonucleotide nucleotidyltransferase.